Consider the following 221-residue polypeptide: Histone H1C (221 aa).

Disordered stretches follow at residues 1-43 (MSDP…PPVS) and 113-221 (AAKK…AKKA). In terms of domain architecture, H15 spans 38 to 112 (THPPVSEMVF…GALGSFKLPA (75 aa)). Composition is skewed to basic residues over residues 141–167 (KVKK…KTTK) and 175–221 (AAKK…AKKA).

Belongs to the histone H1/H5 family.

It localises to the nucleus. The protein localises to the chromosome. Its function is as follows. Histones H1 are necessary for the condensation of nucleosome chains into higher-order structures. The sequence is that of Histone H1C from Chironomus tentans (Midge).